Here is a 190-residue protein sequence, read N- to C-terminus: dCTP deaminase (190 aa).

DCTP is bound by residues 113–118, 137–139, Gln158, Tyr172, and Gln182; these read KSTYAR and TLE. Glu139 (proton donor/acceptor) is an active-site residue.

It belongs to the dCTP deaminase family. In terms of assembly, homotrimer.

The enzyme catalyses dCTP + H2O + H(+) = dUTP + NH4(+). Its pathway is pyrimidine metabolism; dUMP biosynthesis; dUMP from dCTP (dUTP route): step 1/2. Its function is as follows. Catalyzes the deamination of dCTP to dUTP. The protein is dCTP deaminase of Chromobacterium violaceum (strain ATCC 12472 / DSM 30191 / JCM 1249 / CCUG 213 / NBRC 12614 / NCIMB 9131 / NCTC 9757 / MK).